The following is a 66-amino-acid chain: Disk-determining factor A (66 aa).

In terms of biological role, involved in cell-shape determination. Required for the formation of disks. The sequence is that of Disk-determining factor A from Haloferax volcanii (strain ATCC 29605 / DSM 3757 / JCM 8879 / NBRC 14742 / NCIMB 2012 / VKM B-1768 / DS2) (Halobacterium volcanii).